Here is a 147-residue protein sequence, read N- to C-terminus: SsrA-binding protein (147 aa).

The protein belongs to the SmpB family.

The protein resides in the cytoplasm. Required for rescue of stalled ribosomes mediated by trans-translation. Binds to transfer-messenger RNA (tmRNA), required for stable association of tmRNA with ribosomes. tmRNA and SmpB together mimic tRNA shape, replacing the anticodon stem-loop with SmpB. tmRNA is encoded by the ssrA gene; the 2 termini fold to resemble tRNA(Ala) and it encodes a 'tag peptide', a short internal open reading frame. During trans-translation Ala-aminoacylated tmRNA acts like a tRNA, entering the A-site of stalled ribosomes, displacing the stalled mRNA. The ribosome then switches to translate the ORF on the tmRNA; the nascent peptide is terminated with the 'tag peptide' encoded by the tmRNA and targeted for degradation. The ribosome is freed to recommence translation, which seems to be the essential function of trans-translation. The protein is SsrA-binding protein of Mycoplasmopsis fermentans (strain ATCC 19989 / NBRC 14854 / NCTC 10117 / PG18) (Mycoplasma fermentans).